The sequence spans 298 residues: Serine/threonine-protein kinase 1 (298 aa).

The Protein kinase domain occupies 38–276 (FIATRPMFEG…FKSLVSHPWF (239 aa)). ATP contacts are provided by residues 45-53 (FEGGRNNVF) and Lys65. Asp152 (proton acceptor) is an active-site residue.

This sequence belongs to the protein kinase superfamily. Ser/Thr protein kinase family.

It is found in the virion. The protein localises to the host cytoplasm. It catalyses the reaction L-seryl-[protein] + ATP = O-phospho-L-seryl-[protein] + ADP + H(+). It carries out the reaction L-threonyl-[protein] + ATP = O-phospho-L-threonyl-[protein] + ADP + H(+). Functionally, essential for viral replication. It may mediate the virus progression through DNA replication. The sequence is that of Serine/threonine-protein kinase 1 from African swine fever virus (strain Badajoz 1971 Vero-adapted) (Ba71V).